The chain runs to 333 residues: Phosphoribosylformylglycinamidine cyclo-ligase (333 aa).

Belongs to the AIR synthase family.

Its subcellular location is the cytoplasm. The enzyme catalyses 2-formamido-N(1)-(5-O-phospho-beta-D-ribosyl)acetamidine + ATP = 5-amino-1-(5-phospho-beta-D-ribosyl)imidazole + ADP + phosphate + H(+). It participates in purine metabolism; IMP biosynthesis via de novo pathway; 5-amino-1-(5-phospho-D-ribosyl)imidazole from N(2)-formyl-N(1)-(5-phospho-D-ribosyl)glycinamide: step 2/2. This chain is Phosphoribosylformylglycinamidine cyclo-ligase, found in Methanococcoides burtonii (strain DSM 6242 / NBRC 107633 / OCM 468 / ACE-M).